We begin with the raw amino-acid sequence, 328 residues long: MVIIGGGPIGLYATFYAGLRDMRALVIDAQDELGGQLVTLYPEKVVYDVGGYPGILAYDLAQNLIEQAKMFSPDIRINEWADMIERTPDNMWIIKTDKGGAFKTKTILIAAGIGKIIPSRLNAKGEIEYENKGVYYTVRRKRDFEGKRILIVGGGDSAVDWALTLSPVAKSVTLIHRRDQFRAHERSVKQMFQVATVYTWHELKEVKGDGSKVTQAVIFDNRTKEEKTLDVDAVIISIGHKGDLGNMVKWGLNMKGRSITVNGKMETNLAGVYAAGDIVEQEGTPKLALIATGFAQAAIAVSVAKKYIDPNASVFAGHSSEMDNKFKK.

FAD is bound by residues D28, Q36, Y41, A81, I116, D277, and S320.

It belongs to the ferredoxin--NADP reductase type 2 family. In terms of assembly, homodimer. FAD is required as a cofactor.

It carries out the reaction 2 reduced [2Fe-2S]-[ferredoxin] + NADP(+) + H(+) = 2 oxidized [2Fe-2S]-[ferredoxin] + NADPH. The chain is Ferredoxin--NADP reductase 1 from Sulfolobus acidocaldarius (strain ATCC 33909 / DSM 639 / JCM 8929 / NBRC 15157 / NCIMB 11770).